Reading from the N-terminus, the 263-residue chain is CRISPR-associated protein Cas5 2 (263 aa).

This sequence belongs to the CRISPR-associated protein Cas5 family. Subtype I-A/Apern subfamily. In terms of assembly, part of the aCascade ribonucleoprotein complex, minimally composed of Csa2 and Cas5a, which binds crRNA. Other possible components of aCascade in strain P1 are Cas6b (SSO1437) and Csa5 (SSO1443), while SSO1399, Cas5b (SSO1400) and SSO1401 have sometimes been seen weakly associated. Csa2 is probably the major RNA-binding subunit. The Csa2-Cas5a-crRNA complex also binds target DNA homologous to crRNA, probably forming an R-loop. Purified aCascade forms a filament about 6 nm in width.

Its function is as follows. CRISPR (clustered regularly interspaced short palindromic repeat) is an adaptive immune system that provides protection against mobile genetic elements (viruses, transposable elements and conjugative plasmids). CRISPR clusters contain spacers, sequences complementary to antecedent mobile elements, and target invading nucleic acids. CRISPR clusters are transcribed and processed into CRISPR RNA (crRNA). This is CRISPR-associated protein Cas5 2 (cas5b) from Saccharolobus solfataricus (strain ATCC 35092 / DSM 1617 / JCM 11322 / P2) (Sulfolobus solfataricus).